The primary structure comprises 449 residues: Monoacylglycerol lipase (449 aa).

Residue Lys82 forms a Glycyl lysine isopeptide (Lys-Gly) (interchain with G-Cter in ubiquitin) linkage. Positions 151-392 constitute an AB hydrolase-1 domain; the sequence is PMLIILHGLT…LLLETSTGGH (242 aa). Residues 230-234 carry the GXSXG motif; sequence GFSLG. Catalysis depends on Ser232, which acts as the Nucleophile. Catalysis depends on charge relay system residues Asp364 and His392.

The protein belongs to the AB hydrolase superfamily. AB hydrolase 4 family.

It carries out the reaction Hydrolyzes glycerol monoesters of long-chain fatty acids.. It catalyses the reaction 1-hexadecanoylglycerol + H2O = glycerol + hexadecanoate + H(+). The catalysed reaction is 1-octadecanoylglycerol + H2O = octadecanoate + glycerol + H(+). The enzyme catalyses 1-(9Z-octadecenoyl)-glycerol + H2O = glycerol + (9Z)-octadecenoate + H(+). Its function is as follows. Converts monoacylglycerides (MAG) to free fatty acids and glycerol. Has a preference for palmitoyl-MAG. Does not play a significant role in ethyl ester biosynthesis. Also possesses ester hydrolase and low but persistent TAG lipase activity. The chain is Monoacylglycerol lipase from Saccharomyces cerevisiae (strain ATCC 204508 / S288c) (Baker's yeast).